Consider the following 868-residue polypeptide: Leucine--tRNA ligase (868 aa).

The 'HIGH' region motif lies at proline 42–histidine 52. Residues lysine 627–serine 631 carry the 'KMSKS' region motif. An ATP-binding site is contributed by lysine 630.

This sequence belongs to the class-I aminoacyl-tRNA synthetase family.

It localises to the cytoplasm. It carries out the reaction tRNA(Leu) + L-leucine + ATP = L-leucyl-tRNA(Leu) + AMP + diphosphate. The chain is Leucine--tRNA ligase from Pseudomonas entomophila (strain L48).